The following is a 483-amino-acid chain: Altronate oxidoreductase (483 aa).

Position 18-29 (18-29) interacts with NAD(+); sequence IIQFGEGNFLRA.

Belongs to the mannitol dehydrogenase family. UxaB subfamily.

The catalysed reaction is D-altronate + NAD(+) = keto-D-tagaturonate + NADH + H(+). The protein operates within carbohydrate metabolism; pentose and glucuronate interconversion. This Escherichia coli O1:K1 / APEC protein is Altronate oxidoreductase.